A 183-amino-acid chain; its full sequence is Protein Syd (183 aa).

This sequence belongs to the Syd family.

It is found in the cell inner membrane. Functionally, interacts with the SecY protein in vivo. May bind preferentially to an uncomplexed state of SecY, thus functioning either as a chelating agent for excess SecY in the cell or as a regulatory factor that negatively controls the translocase function. The chain is Protein Syd from Aliivibrio fischeri (strain MJ11) (Vibrio fischeri).